We begin with the raw amino-acid sequence, 129 residues long: Small ribosomal subunit protein uS11 (129 aa).

Belongs to the universal ribosomal protein uS11 family. In terms of assembly, part of the 30S ribosomal subunit. Interacts with proteins S7 and S18. Binds to IF-3.

Functionally, located on the platform of the 30S subunit, it bridges several disparate RNA helices of the 16S rRNA. Forms part of the Shine-Dalgarno cleft in the 70S ribosome. The polypeptide is Small ribosomal subunit protein uS11 (Mycoplasma mycoides subsp. mycoides SC (strain CCUG 32753 / NCTC 10114 / PG1)).